We begin with the raw amino-acid sequence, 195 residues long: Large ribosomal subunit protein uL18 (195 aa).

The protein belongs to the universal ribosomal protein uL18 family. As to quaternary structure, part of the 50S ribosomal subunit. Contacts the 5S and 23S rRNAs.

Its function is as follows. This is one of the proteins that bind and probably mediate the attachment of the 5S RNA into the large ribosomal subunit, where it forms part of the central protuberance. This chain is Large ribosomal subunit protein uL18, found in Nanoarchaeum equitans (strain Kin4-M).